Reading from the N-terminus, the 154-residue chain is MLGLGVDRLQADINRLLASLFHQGVLDEQFLQLQQLQDETSPNFVYDVINIYFDESEKLLRNLRLLLMDREFSDYKKIGLHLNQLVGSSSSIGARRVRNVCVAFRSASELSNRPGCLRGLEVVEHEYHYLKNMMHELFQLEQQRILAAGVRYPM.

At methionine 1 the chain carries N-acetylmethionine. One can recognise an HPt domain in the interval 41–137 (SPNFVYDVIN…HYLKNMMHEL (97 aa)).

In terms of assembly, interacts with AHK5.

Its subcellular location is the cytoplasm. The protein localises to the cytosol. It is found in the nucleus. Functionally, functions as a two-component phosphorelay mediator between cytokinin sensor histidine kinases and response regulators (B-type ARRs). Plays an important role in propagating cytokinin signal transduction. The protein is Pseudo histidine-containing phosphotransfer protein 6 (AHP6) of Arabidopsis thaliana (Mouse-ear cress).